The following is a 2207-amino-acid chain: Desmoplakin-B (2207 aa).

3 coiled-coil regions span residues 506–916 (MEEL…EAGK), 952–1000 (AKHA…EQGR), and 1029–1063 (TERLQRLTETLTKDRQRVEEELRAVRLEHEELLKN). The segment covering 905–924 (KQRQVAEEEAGKRRRTESQL) has biased composition (basic and acidic residues). Residues 905 to 933 (KQRQVAEEEAGKRRRTESQLEKSSQAMRE) form a disordered region. Plectin repeat units lie at residues 1369–1406 (LLEAQAATGYIIDPQANTKMTVEEACLNGVVDEADKKQ), 1407–1445 (LLIAEAACVGFRDPKTAKLLPVSQAMKKGIIDRETTLRL), 1446–1483 (LQAQEAAGGILDPILSVYLPKDTAMDRDLVDEDLYQAL), 1571–1609 (YLRGSTCIAGIYDEAGECTLPIYQAMKNGLLRPGTTLEL), 1610–1647 (LEAQAASGFVIDPINNEYYTVEEACQKGLVGVEFKDKL), 1685–1723 (LLEAQIASGGIIDPKHSHRIDVDVAYQRGYFDQGMNQIL), 1783–1811 (IVDPDSNKEMTVREAYEKKLIDYETFLEL), 1992–2029 (LLEAQACTGGIVSPDNGRRMSIQEATRVGVLDDEMANR), and 2068–2106 (FLEFQYLTGGLFDPELGCRRSLEEALQMGWLDMRAAQRL). Residues 2155–2164 (ISSPYNLSNP) are compositionally biased toward polar residues. The tract at residues 2155–2207 (ISSPYNLSNPGSASGSRSGSRRGSVDYSLSPSSSSRYSSFSYSRTSFSSRSLS) is disordered. Over residues 2165–2207 (GSASGSRSGSRRGSVDYSLSPSSSSRYSSFSYSRTSFSSRSLS) the composition is skewed to low complexity.

Belongs to the plakin or cytolinker family.

The protein localises to the cell junction. The protein resides in the desmosome. Its subcellular location is the cell membrane. Involved in the organization of desmosome cell-cell junctions. Of particular importance in cell adhesion in the skin and during cardiac development. May also play a role in the regulation of Wnt, TGF-beta and Hippo signaling pathways. In Danio rerio (Zebrafish), this protein is Desmoplakin-B.